The primary structure comprises 270 residues: Splicing factor YJU2 (270 aa).

The disordered stretch occupies residues 1-32 (MSERKVLNKYIPPDYDPSIRPPKKKKKFQGPN). C48, C51, C84, and C87 together coordinate Zn(2+). The disordered stretch occupies residues 251 to 270 (PNFQPPKYAKRKMEKKKVLV). The segment covering 258 to 270 (YAKRKMEKKKVLV) has biased composition (basic residues).

It belongs to the CWC16 family. YJU2 subfamily. In terms of assembly, component of the spliceosome. Present in the activated B complex, the catalytically activated B* complex which catalyzes the branching, the catalytic step 1 C complex catalyzing the exon ligation, and the postcatalytic P complex containing the ligated exons (mRNA) and the excised lariat intron. Belongs to the 40S cdc5-associated complex (or cwf complex), a spliceosome sub-complex reminiscent of a late-stage spliceosome composed of the U2, U5 and U6 snRNAs and at least brr2, cdc5, cwf2/prp3, cwf3/syf1, cwf4/syf3, cwf5/ecm2, spp42/cwf6, cwf7/spf27, cwf8, cwf9, cwf10, cwf11, cwf12, prp45/cwf13, cwf14, cwf15, cwf16, cwf17, cwf18, cwf19, cwf20, cwf21, cwf22, cwf23, cwf24, cwf25, cwf26, cyp7/cwf27, cwf28, cwf29/ist3, lea1, msl1, prp5/cwf1, prp10, prp12/sap130, prp17, prp22, sap61, sap62, sap114, sap145, slu7, smb1, smd1, smd3, smf1, smg1 and syf2.

Its subcellular location is the nucleus. Its function is as follows. Part of the spliceosome which catalyzes two sequential transesterification reactions, first the excision of the non-coding intron from pre-mRNA and then the ligation of the coding exons to form the mature mRNA. Plays a role in stabilizing the structure of the spliceosome catalytic core and docking of the branch helix into the active site, producing 5'-exon and lariat intron-3'-intermediates. The sequence is that of Splicing factor YJU2 (cwf16) from Schizosaccharomyces pombe (strain 972 / ATCC 24843) (Fission yeast).